The primary structure comprises 216 residues: Probable phosphatase SPAC513.02 (216 aa).

His15 functions as the Tele-phosphohistidine intermediate in the catalytic mechanism.

This sequence belongs to the phosphoglycerate mutase family. BPG-dependent PGAM subfamily.

It localises to the cytoplasm. The protein resides in the nucleus. The sequence is that of Probable phosphatase SPAC513.02 from Schizosaccharomyces pombe (strain 972 / ATCC 24843) (Fission yeast).